Reading from the N-terminus, the 541-residue chain is Solute carrier family 22 member 10 (541 aa).

The Cytoplasmic segment spans residues 1 to 15 (MAFEELLSQVGGLGR). The chain crosses the membrane as a helical span at residues 16–36 (FQMLHLVFILPSLMLLIPHIL). The Extracellular segment spans residues 37-145 (LENFAAAIPG…DLVCDYQSLK (109 aa)). N-linked (GlcNAc...) asparagine glycans are attached at residues Asn56 and Asn102. A helical transmembrane segment spans residues 146–166 (SVVQFLLLTGMLVGGIIGGHV). Over 167–193 (SDRFGRRFILRWCLLQLAITDTCAAFA) the chain is Cytoplasmic. The helical transmembrane segment at 194–214 (PTFPVYCVLRFLAGFSSMIII) threads the bilayer. Residues 215–230 (SNNSLPITEWIRPNSK) lie on the Extracellular side of the membrane. The chain crosses the membrane as a helical span at residues 231-251 (ALVVILSSGALSIGQIILGGL). Over 252–259 (AYVFRDWQ) the chain is Cytoplasmic. The helical transmembrane segment at 260–280 (TLHVVASVPFFVFFLLSRWLV) threads the bilayer. At 281-349 (ESARWLIITN…LFRNPSMRKR (69 aa)) the chain is on the extracellular side. The helical transmembrane segment at 350–370 (ICILVFLRFANTIPFYGTMVN) threads the bilayer. The Cytoplasmic portion of the chain corresponds to 371–377 (LQHVGSN). The chain crosses the membrane as a helical span at residues 378–398 (IFLLQVLYGAVALIVRCLALL). The Extracellular portion of the chain corresponds to 399–406 (TLNHMGRR). Residues 407-427 (ISQILFMFLVGLSILANTFVP) traverse the membrane as a helical segment. Residues 428–436 (KEMQTLRVA) are Cytoplasmic-facing. The chain crosses the membrane as a helical span at residues 437 to 457 (LACLGIGCSAATFSSVAVHFI). The Extracellular segment spans residues 458 to 472 (ELIPTVLRARASGID). A helical transmembrane segment spans residues 473–493 (LTASRIGAALAPLLMTLTVFF). Residues 494–495 (TT) are Cytoplasmic-facing. Residues 496 to 516 (LPWIIYGIFPIIGGLIVFLLP) form a helical membrane-spanning segment. At 517–541 (ETKNLPLPDTIKDVENQKKNLKEKA) the chain is on the extracellular side.

This sequence belongs to the major facilitator (TC 2.A.1) superfamily. Organic cation transporter (TC 2.A.1.19) family. As to expression, detected in fetal and adult liver, and in adult kidney.

Its subcellular location is the membrane. In Homo sapiens (Human), this protein is Solute carrier family 22 member 10 (SLC22A10).